Here is a 596-residue protein sequence, read N- to C-terminus: Ulvan-active sulfatase (596 aa).

An N-terminal signal peptide occupies residues 1-27 (MLFLRFKFFNNRLLFVSVLCFVICVSC). Ca(2+)-binding residues include Glu58, Asp59, Cys97, Asp306, and His307. Residue Cys97 is the Nucleophile of the active site. Cys97 carries the 3-oxoalanine (Cys) modification.

This sequence belongs to the sulfatase family. Ca(2+) serves as cofactor. The conversion to 3-oxoalanine (also known as C-formylglycine, FGly), of a serine or cysteine residue in prokaryotes and of a cysteine residue in eukaryotes, is critical for catalytic activity.

It localises to the periplasm. Its function is as follows. Sulfatase involved in ulvan degradation. Ulvan is the main polysaccharide component of the Ulvales (green seaweed) cell wall. It is composed of disaccharide building blocks comprising 3-sulfated rhamnose (Rha3S) linked to D-glucuronic acid (GlcA), L-iduronic acid (IduA), or D-xylose (Xyl). The sulfatase desulfates Xyl2S-Rha3S, product of the degradation of ulvan by endo-acting alpha-1,4-L-rhamnosidase, to Xyl-Rha3S. In Formosa agariphila (strain DSM 15362 / KCTC 12365 / LMG 23005 / KMM 3901 / M-2Alg 35-1), this protein is Ulvan-active sulfatase.